The chain runs to 2193 residues: Protein sidekick-1 (2193 aa).

A compositionally biased stretch (low complexity) spans 1-23; it reads MARARPSVAGGGVAAPPERAGPG. Positions 1-56 are disordered; sequence MARARPSVAGGGVAAPPERAGPGRPRRSRTGHHCDPECPGLRAAPRTPGPGAGRRA. Ig-like C2-type domains are found at residues 86–168, 173–259, 275–363, 368–458, and 462–551; these read PYFK…SEIQ, GNFM…SPFI, PIIV…AFLS, PYFT…LDVT, and PAFT…AMLT. C108 and C151 form a disulfide bridge. Residues N123, N253, and N283 are each glycosylated (N-linked (GlcNAc...) asparagine). Intrachain disulfides connect C297/C344, C390/C440, and C483/C535. N532, N545, and N554 each carry an N-linked (GlcNAc...) asparagine glycan. Residues 556-645 enclose the Ig-like C2-type 6 domain; that stretch reads TSIVHPPEDR…GSDSRTARLE (90 aa). A disulfide bridge connects residues C577 and C629. Fibronectin type-III domains lie at 652–748, 753–849, 854–952, 956–1050, 1054–1153, 1158–1256, 1261–1358, 1362–1456, 1461–1558, 1563–1681, 1686–1782, 1786–1881, and 1884–1982; these read PPQN…LPEE, PPKN…TLQG, PPQN…THED, AVGH…VPPD, APSN…TLQA, APTS…TRES, APEN…TKDD, PPVR…TEKR, PPRE…TLQD, PPGS…VGEA, APQN…THQA, PPSF…AGPA, and SPGS…SAQA. 5 N-linked (GlcNAc...) asparagine glycosylation sites follow: N764, N803, N864, N997, and N1006. Residues N1264 and N1315 are each glycosylated (N-linked (GlcNAc...) asparagine). 4 N-linked (GlcNAc...) asparagine glycosylation sites follow: N1636, N1730, N1801, and N1875. The chain crosses the membrane as a helical span at residues 1992-2012; it reads FLLVMALSSLLLILLVVFVLV. Residues 2013-2193 lie on the Cytoplasmic side of the membrane; that stretch reads LHGQSKKYKS…APLTGFSSFV (181 aa). Residues 2057 to 2080 are disordered; it reads STFSKKNGTRSPPRPSPGGLHYSD. The short motif at 2187–2193 is the PDZ-binding element; that stretch reads TGFSSFV.

Belongs to the sidekick family. In terms of assembly, homodimer; mediates homophilic interactions to promote cell adhesion. Interacts (via PDZ-binding motif) with MAGI1, MAGI2, DLG2, DLG3 and DLG4. As to quaternary structure, does not mediate homophilic interactions. Expressed by non-overlapping subsets of retinal neurons. Sdk1 and Sdk2 are expressed in non-overlapping subsets of interneurons and retinal ganglion cells (RGCs) that form synapses in distinct inner plexiform layer (IPL) sublaminae (at protein level).

The protein resides in the cell membrane. It localises to the synapse. Functionally, adhesion molecule that promotes lamina-specific synaptic connections in the retina. Expressed in specific subsets of interneurons and retinal ganglion cells (RGCs) and promotes synaptic connectivity via homophilic interactions. The polypeptide is Protein sidekick-1 (Mus musculus (Mouse)).